A 73-amino-acid polypeptide reads, in one-letter code: MKAGIHPEYKAVNATCSCGNSFEFNSTLGKESIHLDVCDKCHPFYTGKQRIVDTGGRVDRFNKRFGALSSGKK.

Residues cysteine 16, cysteine 18, cysteine 38, and cysteine 41 each contribute to the Zn(2+) site.

This sequence belongs to the bacterial ribosomal protein bL31 family. Type A subfamily. Part of the 50S ribosomal subunit. The cofactor is Zn(2+).

Its function is as follows. Binds the 23S rRNA. The sequence is that of Large ribosomal subunit protein bL31 from Vibrio parahaemolyticus serotype O3:K6 (strain RIMD 2210633).